A 323-amino-acid polypeptide reads, in one-letter code: Mycothiol acetyltransferase (323 aa).

Glu-44 is a 1D-myo-inositol 2-(L-cysteinylamino)-2-deoxy-alpha-D-glucopyranoside binding site. 2 consecutive N-acetyltransferase domains span residues 77–176 (GQDL…VSLR) and 173–323 (VSLR…VKEG). 98–100 (IAV) is a binding site for acetyl-CoA. 1D-myo-inositol 2-(L-cysteinylamino)-2-deoxy-alpha-D-glucopyranoside is bound by residues Glu-200, Lys-240, and Glu-253. Acetyl-CoA contacts are provided by residues 257–259 (VGV) and 264–270 (QGSGLGK). 1D-myo-inositol 2-(L-cysteinylamino)-2-deoxy-alpha-D-glucopyranoside is bound at residue Tyr-291.

This sequence belongs to the acetyltransferase family. MshD subfamily. In terms of assembly, monomer.

It carries out the reaction 1D-myo-inositol 2-(L-cysteinylamino)-2-deoxy-alpha-D-glucopyranoside + acetyl-CoA = mycothiol + CoA + H(+). Catalyzes the transfer of acetyl from acetyl-CoA to desacetylmycothiol (Cys-GlcN-Ins) to form mycothiol. The sequence is that of Mycothiol acetyltransferase from Pseudarthrobacter chlorophenolicus (strain ATCC 700700 / DSM 12829 / CIP 107037 / JCM 12360 / KCTC 9906 / NCIMB 13794 / A6) (Arthrobacter chlorophenolicus).